Here is a 331-residue protein sequence, read N- to C-terminus: D-alanine--D-alanine ligase (331 aa).

The 201-residue stretch at 116–316 folds into the ATP-grasp domain; the sequence is KRQWQTHGLP…YEDFVLQLAA (201 aa). 142 to 197 contacts ATP; that stretch reads ADRLGLPLIVKPAREGSSIGLTKVTSVAELPAAYEKAARLDRDVMAEQFIEGDELT. Mg(2+) is bound by residues Asp-269, Glu-283, and Asn-285.

Belongs to the D-alanine--D-alanine ligase family. Requires Mg(2+) as cofactor. It depends on Mn(2+) as a cofactor.

Its subcellular location is the cytoplasm. It carries out the reaction 2 D-alanine + ATP = D-alanyl-D-alanine + ADP + phosphate + H(+). The protein operates within cell wall biogenesis; peptidoglycan biosynthesis. In terms of biological role, cell wall formation. This chain is D-alanine--D-alanine ligase, found in Ralstonia pickettii (strain 12J).